Reading from the N-terminus, the 528-residue chain is Na(+)/H(+) antiporter NhaB (528 aa).

Residues 1 to 23 (MPISLGNAFIKNFLGKAPDWYKV) are Cytoplasmic-facing. Residues 24-46 (AIIAFLIINPIVFFLINPFVAGW) traverse the membrane as a helical segment. The Periplasmic portion of the chain corresponds to 47–95 (LLVAEFIFTLAMALKCYPLQPGGLLAIEAIAIGMTSPAQVKHELVANIE). The helical transmembrane segment at 96-118 (VLLLLVFMVAGIYFMKHLLLFIF) threads the bilayer. At 119 to 129 (TKILLGIRSKT) the chain is on the cytoplasmic side. A helical membrane pass occupies residues 130 to 163 (LLSLAFCFAAAFLSAFLDALTVIAVVISVAIGFY). The Periplasmic segment spans residues 164–239 (SIYHKVASGN…ADQAGWLFGE (76 aa)). Residues 240-262 (FLIRMSPVTLPVFFCGLITCALV) traverse the membrane as a helical segment. Residues 263 to 297 (EKLKVFGYGAKLPNNVRQILVDFDNEERKTRTNQD) are Cytoplasmic-facing. A helical membrane pass occupies residues 298-317 (VAKLWVQGLIAVWLIVALAL). Over 318 to 320 (HLA) the chain is Periplasmic. Residues 321 to 340 (AVGLIGLSVIILATAFTGVI) form a helical membrane-spanning segment. Over 341–352 (EEHSMGKAFEEA) the chain is Cytoplasmic. The helical transmembrane segment at 353 to 375 (LPFTALLAVFFSIVAVIIDQELF) threads the bilayer. Over 376 to 389 (KPVIDAVLAVEDKG) the chain is Periplasmic. Residues 390–412 (TQLALFYVANGLLSMVSDNVFVG) traverse the membrane as a helical segment. Over 413 to 477 (TVYINEVKTA…PLIRLSYGRM (65 aa)) the chain is Cytoplasmic. The chain crosses the membrane as a helical span at residues 478 to 500 (VIMALPYTIVLAIVGLMGIMFFL). Over 501-528 (EPATASFYDAGWILPHSGDLTPVVSGGH) the chain is Periplasmic.

This sequence belongs to the NhaB Na(+)/H(+) (TC 2.A.34) antiporter family.

The protein resides in the cell inner membrane. The enzyme catalyses 2 Na(+)(in) + 3 H(+)(out) = 2 Na(+)(out) + 3 H(+)(in). In terms of biological role, na(+)/H(+) antiporter that extrudes sodium in exchange for external protons. The polypeptide is Na(+)/H(+) antiporter NhaB (Vibrio alginolyticus).